A 1058-amino-acid chain; its full sequence is Carbamoyl phosphate synthase large chain (1058 aa).

The tract at residues 1-401 is carboxyphosphate synthetic domain; that stretch reads MPKRKDIQKI…SLLKACRSLE (401 aa). The ATP site is built by arginine 129, arginine 169, glycine 175, glycine 176, arginine 208, isoleucine 210, glutamate 215, glycine 241, isoleucine 242, histidine 243, glutamine 284, and glutamate 298. Positions 133 to 327 constitute an ATP-grasp 1 domain; that stretch reads KQLMQELDQP…IAKLAAKIAV (195 aa). Residues glutamine 284, glutamate 298, and asparagine 300 each contribute to the Mg(2+) site. Glutamine 284, glutamate 298, and asparagine 300 together coordinate Mn(2+). Positions 402-546 are oligomerization domain; that stretch reads IGVCHNEMTS…YSTYELENES (145 aa). The segment at 547-929 is carbamoyl phosphate synthetic domain; that stretch reads VQSNKESILV…ALYKAFEANN (383 aa). In terms of domain architecture, ATP-grasp 2 spans 671-861; that stretch reads EKALKELGIP…MAQIATKLIL (191 aa). 10 residues coordinate ATP: arginine 707, serine 746, isoleucine 748, glutamate 752, glycine 777, valine 778, histidine 779, serine 780, glutamine 820, and glutamate 832. Residues glutamine 820, glutamate 832, and asparagine 834 each contribute to the Mg(2+) site. 3 residues coordinate Mn(2+): glutamine 820, glutamate 832, and asparagine 834. Residues 930–1058 enclose the MGS-like domain; it reads SHLSEFGQIV…ESRCFNIEAI (129 aa). The interval 930–1058 is allosteric domain; that stretch reads SHLSEFGQIV…ESRCFNIEAI (129 aa).

It belongs to the CarB family. As to quaternary structure, composed of two chains; the small (or glutamine) chain promotes the hydrolysis of glutamine to ammonia, which is used by the large (or ammonia) chain to synthesize carbamoyl phosphate. Tetramer of heterodimers (alpha,beta)4. It depends on Mg(2+) as a cofactor. Requires Mn(2+) as cofactor.

It catalyses the reaction hydrogencarbonate + L-glutamine + 2 ATP + H2O = carbamoyl phosphate + L-glutamate + 2 ADP + phosphate + 2 H(+). It carries out the reaction hydrogencarbonate + NH4(+) + 2 ATP = carbamoyl phosphate + 2 ADP + phosphate + 2 H(+). It functions in the pathway amino-acid biosynthesis; L-arginine biosynthesis; carbamoyl phosphate from bicarbonate: step 1/1. The protein operates within pyrimidine metabolism; UMP biosynthesis via de novo pathway; (S)-dihydroorotate from bicarbonate: step 1/3. In terms of biological role, large subunit of the glutamine-dependent carbamoyl phosphate synthetase (CPSase). CPSase catalyzes the formation of carbamoyl phosphate from the ammonia moiety of glutamine, carbonate, and phosphate donated by ATP, constituting the first step of 2 biosynthetic pathways, one leading to arginine and/or urea and the other to pyrimidine nucleotides. The large subunit (synthetase) binds the substrates ammonia (free or transferred from glutamine from the small subunit), hydrogencarbonate and ATP and carries out an ATP-coupled ligase reaction, activating hydrogencarbonate by forming carboxy phosphate which reacts with ammonia to form carbamoyl phosphate. In Streptococcus pyogenes serotype M3 (strain SSI-1), this protein is Carbamoyl phosphate synthase large chain.